The following is a 259-amino-acid chain: MASPQGGQIAIAMRLRNQLQSVYKMDPLRNEEEVRVKIKDLNEHIVCCLCAGYFVDATTITECLHTFCKSCIVKYLQTSKYCPMCNIKIHETQPLLNHKLDRVMQDIVYKLVPGLQDSEEKRIREFYQSRGLDRVTQPSGEEPALSNLGLPFSSFDHSKAHYYRYDEQLSLCLERLSSGKDKNKSILQNKYVRCSVRAEVRHLRRVLCHRLMLNPQHVQLLFDNEVLPDHMTMKQIWLSHWFGKPSPLLLQYSVKEKRR.

An N-acetylalanine modification is found at A2. Residue S3 is modified to Phosphoserine. Residue K24 forms a Glycyl lysine isopeptide (Lys-Gly) (interchain with G-Cter in SUMO2) linkage. The RING-type zinc-finger motif lies at 47-86 (CCLCAGYFVDATTITECLHTFCKSCIVKYLQTSKYCPMCN). Positions 86–247 (NIKIHETQPL…LSHWFGKPSP (162 aa)) are necessary for repressor activity. K88 is covalently cross-linked (Glycyl lysine isopeptide (Lys-Gly) (interchain with G-Cter in SUMO2)). The interval 150–255 (LPFSSFDHSK…SPLLLQYSVK (106 aa)) is required for the interaction with the KDM2B-SKP1 heterodimeric complex. Residues 167 to 255 (EQLSLCLERL…SPLLLQYSVK (89 aa)) form an RING-finger and WD40-associated ubiquitin-like domain (RAWUL); sufficient for interaction with BCOR and BCORL1 region.

As to quaternary structure, interacts with BCORL1, forming heterodimers. The PCGF1-BCORL1 heterodimeric complex interacts with the KDM2B-SKP1 heterodimeric complex to form a homotetrameric polycomb repression complex 1 (PRC1.1). Component of the repressive BCOR complex containing a Polycomb group subcomplex at least composed of RYBP, RING1 and RNF2/RING2. Specifically interacts with BCOR, RING1 and RNF2/RING2. Component of a PRC1-like complex. Interacts with CBX6, CBX7 and CBX8. Interacts with DPPA4, NANOG, POU5F1 and RYBP.

It is found in the nucleus. Component of the Polycomb group (PcG) multiprotein BCOR complex, a complex required to maintain the transcriptionally repressive state of some genes, such as BCL6 and the cyclin-dependent kinase inhibitor, CDKN1A. Transcriptional repressor that may be targeted to the DNA by BCL6; this transcription repressor activity may be related to PKC signaling pathway. Represses CDKN1A expression by binding to its promoter, and this repression is dependent on the retinoic acid response element (RARE element). Promotes cell cycle progression and enhances cell proliferation as well. May have a positive role in tumor cell growth by down-regulating CDKN1A. Component of a Polycomb group (PcG) multiprotein PRC1-like complex, a complex class required to maintain the transcriptionally repressive state of many genes, including Hox genes, throughout development. PcG PRC1 complex acts via chromatin remodeling and modification of histones; it mediates monoubiquitination of histone H2A 'Lys-119', rendering chromatin heritably changed in its expressibility. Within the PRC1-like complex, regulates RNF2 ubiquitin ligase activity. Regulates the expression of DPPA4 and NANOG in the NT2 embryonic carcinoma cells. In Bos taurus (Bovine), this protein is Polycomb group RING finger protein 1 (PCGF1).